The sequence spans 694 residues: DNA-directed RNA polymerase subunit beta' (694 aa).

Zn(2+) is bound by residues cysteine 69, cysteine 71, cysteine 87, and cysteine 90. Mg(2+) is bound by residues aspartate 489, aspartate 491, and aspartate 493.

Belongs to the RNA polymerase beta' chain family. RpoC1 subfamily. In terms of assembly, in plastids the minimal PEP RNA polymerase catalytic core is composed of four subunits: alpha, beta, beta', and beta''. When a (nuclear-encoded) sigma factor is associated with the core the holoenzyme is formed, which can initiate transcription. Mg(2+) is required as a cofactor. It depends on Zn(2+) as a cofactor.

The protein resides in the plastid. The protein localises to the chloroplast. It carries out the reaction RNA(n) + a ribonucleoside 5'-triphosphate = RNA(n+1) + diphosphate. Its function is as follows. DNA-dependent RNA polymerase catalyzes the transcription of DNA into RNA using the four ribonucleoside triphosphates as substrates. This chain is DNA-directed RNA polymerase subunit beta', found in Gossypium barbadense (Sea Island cotton).